The primary structure comprises 288 residues: MSSSMWYIMQSIQSKYSLSERLIRTIAAIRSFPHDNVEDLIRGGADVNCTHGTLKPLHCACMVSDADCVELLLEKGAEVNALDGYNRTALHYAAEKDEACVEVLLEYGANPNALDGNRDTPLHWAAFKNNAECVRALLESGASVNALDYNNDTPLSWAAMKGNLESVSILLDYGAEVRVINLIGQTPISRLVALLVRGLGTEKEDSCFELLHRAVGHFELRKNGTMPREVARDPQLCEKLTVLCSAPGTLKTLARYTVRRSLGLQYLPDAVKGLPLPASLKEYLLLLE.

Phosphoserine is present on Ser17. ANK repeat units lie at residues 52–81 (GTLK…EVNA), 85–113 (YNRT…NPNA), 117–146 (NRDT…SVNA), and 150–179 (NNDT…EVRV). Residues 235–288 (QLCEKLTVLCSAPGTLKTLARYTVRRSLGLQYLPDAVKGLPLPASLKEYLLLLE) enclose the SOCS box domain.

It belongs to the ankyrin SOCS box (ASB) family. In terms of assembly, interacts with TBK1; this interaction promotes TBK1 proteasomal degradation. Post-translationally, phosphorylated by TBK1.

The protein resides in the cytoplasm. Its pathway is protein modification; protein ubiquitination. In terms of biological role, may be a substrate-recognition component of a SCF-like ECS (Elongin-Cullin-SOCS-box protein) E3 ubiquitin-protein ligase complex which mediates the ubiquitination and subsequent proteasomal degradation of target proteins. Inhibits IFN-beta production through the IRF3 signaling pathway by targeting TBK1 via 'Lys-48'-linked ubiquitination, leading to its proteasomal degradation. The polypeptide is Ankyrin repeat and SOCS box protein 8 (ASB8) (Pongo abelii (Sumatran orangutan)).